A 267-amino-acid polypeptide reads, in one-letter code: 4-hydroxy-tetrahydrodipicolinate reductase (267 aa).

Residues 10-15 (GCGGRM) and Glu-36 contribute to the NAD(+) site. Arg-37 serves as a coordination point for NADP(+). NAD(+) is bound by residues 99–101 (GTT) and 123–126 (APNF). The active-site Proton donor/acceptor is His-156. Position 157 (His-157) interacts with (S)-2,3,4,5-tetrahydrodipicolinate. The active-site Proton donor is Lys-160. 166–167 (GT) is a binding site for (S)-2,3,4,5-tetrahydrodipicolinate.

Belongs to the DapB family.

It localises to the cytoplasm. The catalysed reaction is (S)-2,3,4,5-tetrahydrodipicolinate + NAD(+) + H2O = (2S,4S)-4-hydroxy-2,3,4,5-tetrahydrodipicolinate + NADH + H(+). It catalyses the reaction (S)-2,3,4,5-tetrahydrodipicolinate + NADP(+) + H2O = (2S,4S)-4-hydroxy-2,3,4,5-tetrahydrodipicolinate + NADPH + H(+). It functions in the pathway amino-acid biosynthesis; L-lysine biosynthesis via DAP pathway; (S)-tetrahydrodipicolinate from L-aspartate: step 4/4. In terms of biological role, catalyzes the conversion of 4-hydroxy-tetrahydrodipicolinate (HTPA) to tetrahydrodipicolinate. The chain is 4-hydroxy-tetrahydrodipicolinate reductase from Laribacter hongkongensis (strain HLHK9).